The chain runs to 510 residues: Protein HGV2 (510 aa).

Positions 95–227 (GVPEEDADGD…KENESEEDPD (133 aa)) are disordered. Acidic residues predominate over residues 98–110 (EEDADGDSDQEQE). Basic and acidic residues-rich tracts occupy residues 111 to 129 (QFEK…REEV) and 142 to 199 (EERG…DKPV). Low complexity predominate over residues 204-217 (TEEPGTSGTSASSS). TPR repeat units lie at residues 260–293 (AQCH…QKDL) and 302–335 (AETY…LEAR). The segment at 391 to 510 (DGSPFRQASE…TPKKDAAKRR (120 aa)) is disordered. A compositionally biased stretch (low complexity) spans 398-411 (ASEGESSSGLGAST). 2 consecutive short sequence motifs (nuclear localization signal) follow at residues 444-451 (VRRKRPSP) and 465-471 (SKKAKQE). The segment covering 459–471 (ESKENESKKAKQE) has biased composition (basic and acidic residues).

This sequence belongs to the NASP family. Embryo and larvae.

It localises to the nucleus. In terms of biological role, may function as a nucleosome assembly factor during rapid embryonic cell divisions. The chain is Protein HGV2 (HGV2) from Halocynthia roretzi (Sea squirt).